Here is a 224-residue protein sequence, read N- to C-terminus: Cytochrome c oxidase subunit 2 (224 aa).

Topologically, residues 1-26 (MSTWGQMNLMDPASPIQIEMMLFHDH) are mitochondrial intermembrane. The chain crosses the membrane as a helical span at residues 27 to 48 (AMAILIGIFTLVSCLGVKLCFN). Topologically, residues 49–62 (TLSTRTMHEAQLLE) are mitochondrial matrix. The chain crosses the membrane as a helical span at residues 63–82 (TLWTILPAFLLVWLALPSLR). At 83-224 (LLYLLDEQSS…DVKDFINMCN (142 aa)) the chain is on the mitochondrial intermembrane side. 6 residues coordinate Cu cation: H161, C196, E198, C200, H204, and M207. Position 198 (E198) interacts with Mg(2+).

Belongs to the cytochrome c oxidase subunit 2 family. Component of the cytochrome c oxidase (complex IV, CIV), a multisubunit enzyme composed of a catalytic core of 3 subunits and several supernumerary subunits. The complex exists as a monomer or a dimer and forms supercomplexes (SCs) in the inner mitochondrial membrane with ubiquinol-cytochrome c oxidoreductase (cytochrome b-c1 complex, complex III, CIII). The cofactor is Cu cation.

The protein resides in the mitochondrion inner membrane. The catalysed reaction is 4 Fe(II)-[cytochrome c] + O2 + 8 H(+)(in) = 4 Fe(III)-[cytochrome c] + 2 H2O + 4 H(+)(out). Component of the cytochrome c oxidase, the last enzyme in the mitochondrial electron transport chain which drives oxidative phosphorylation. The respiratory chain contains 3 multisubunit complexes succinate dehydrogenase (complex II, CII), ubiquinol-cytochrome c oxidoreductase (cytochrome b-c1 complex, complex III, CIII) and cytochrome c oxidase (complex IV, CIV), that cooperate to transfer electrons derived from NADH and succinate to molecular oxygen, creating an electrochemical gradient over the inner membrane that drives transmembrane transport and the ATP synthase. Cytochrome c oxidase is the component of the respiratory chain that catalyzes the reduction of oxygen to water. Electrons originating from reduced cytochrome c in the intermembrane space (IMS) are transferred via the dinuclear copper A center (CU(A)) of subunit 2 and heme A of subunit 1 to the active site in subunit 1, a binuclear center (BNC) formed by heme A3 and copper B (CU(B)). The BNC reduces molecular oxygen to 2 water molecules using 4 electrons from cytochrome c in the IMS and 4 protons from the mitochondrial matrix. This chain is Cytochrome c oxidase subunit 2 (COII), found in Albinaria turrita (Door snail).